Consider the following 896-residue polypeptide: Alanine--tRNA ligase (896 aa).

Basic and acidic residues predominate over residues 439 to 456 (QRAKDDAKAKKGQHRDAS). The segment at 439–459 (QRAKDDAKAKKGQHRDASAYR) is disordered. Residues H579, H583, C681, and H685 each contribute to the Zn(2+) site.

It belongs to the class-II aminoacyl-tRNA synthetase family. Zn(2+) is required as a cofactor.

Its subcellular location is the cytoplasm. It catalyses the reaction tRNA(Ala) + L-alanine + ATP = L-alanyl-tRNA(Ala) + AMP + diphosphate. Its function is as follows. Catalyzes the attachment of alanine to tRNA(Ala) in a two-step reaction: alanine is first activated by ATP to form Ala-AMP and then transferred to the acceptor end of tRNA(Ala). Also edits incorrectly charged Ser-tRNA(Ala) and Gly-tRNA(Ala) via its editing domain. This is Alanine--tRNA ligase from Nocardioides sp. (strain ATCC BAA-499 / JS614).